The primary structure comprises 202 residues: CASP-like protein 1U4 (202 aa).

Residues 1 to 10 are Cytoplasmic-facing; the sequence is MCLPAKWLHP. A helical transmembrane segment spans residues 11–31; the sequence is VSLIFRVAGIGLAAVSAAAML. Residues 32–56 lie on the Extracellular side of the membrane; sequence TASQCTVYADYGWRPRTVTYSDFPA. Residues 57 to 77 form a helical membrane-spanning segment; sequence FVYLVAATAIATLLEAVALFL. Topologically, residues 78–94 are cytoplasmic; the sequence is SWSKKGKSKKSWRVLTM. Residues 95-115 form a helical membrane-spanning segment; the sequence is LLLGAVVPALLYTSAGAAFAV. Over 116–146 the chain is Extracellular; sequence GWEDIYYYLEPIGRRFSVCRSSVAGGRFCEH. The helical transmembrane segment at 147-167 threads the bilayer; that stretch reads VHVSMWLALGAAVAVSFAEFL. Topologically, residues 168-202 are cytoplasmic; it reads TTFRWCHGSGSCSDSDSDSDSDSESGCGHGCHCKH.

This sequence belongs to the Casparian strip membrane proteins (CASP) family. Homodimer and heterodimers.

Its subcellular location is the cell membrane. This is CASP-like protein 1U4 from Sorghum bicolor (Sorghum).